The primary structure comprises 1193 residues: Chloride channel protein 2 (1193 aa).

At 1-168 (MVYFGDRQRD…WIWRHTVARL (168 aa)) the chain is on the cytoplasmic side. Residues 76–97 (SHAFYPCPPPAENARDSDSSDD) are disordered. 2 helical membrane passes run 169–204 (GEDW…IWLY) and 213–236 (VQYI…VHLI). The Selectivity filter part_1 motif lies at 242–246 (GSGIP). Position 243 (S243) interacts with chloride. Positions 245–252 (IPEMKTIL) form an intramembrane region, helical. Helical transmembrane passes span 261–279 (LTFK…TLGS) and 286–304 (EGPF…SKLV). Residues 284 to 288 (GKEGP) carry the Selectivity filter part_2 motif. Intramembrane regions (helical) lie at residues 320–332 (MLAA…VGAC) and 336–344 (PVGGVLFSI). Helical transmembrane passes span 356–373 (YWRG…FRLL), 402–430 (LFVF…VLFM), 439–458 (FLQK…VSSI), 511–530 (FGNL…IAST), and 536–555 (GMFI…VGEF). Positions 536-540 (GMFIP) match the Selectivity filter part_3 motif. F538 contacts chloride. The segment at residues 576-590 (GGYAVVGAAAFSGSV) is an intramembrane region (helical). The segment at residues 591–592 (TH) is an intramembrane region (note=Loop between two helices). The helical intramembrane region spans 593-604 (TVSVAVIIFEMT). An intramembrane region (note=Loop between two helices) is located at residues 605–609 (GQITH). Residues 610–626 (VVPVMIAVLVANAVAAL) traverse the membrane as a helical segment. Topologically, residues 627–1193 (LQPSIYDSII…KSNTENGNHA (567 aa)) are cytoplasmic. Position 632 (Y632) interacts with chloride. The CBS 1 domain maps to 663-723 (MVRDVKYIWH…KMIEKHIGRE (61 aa)). 3 disordered regions span residues 848 to 884 (TLQD…VSKK), 1103 to 1122 (NSFV…AVEK), and 1159 to 1193 (IKHT…GNHA). The 58-residue stretch at 1048–1105 (IDPSPFQLVERTSILKVHSLFSMVGINHAYVTKIGRLVGVVGLKELRKAIEDINSNSF) folds into the CBS 2 domain. Over residues 1165 to 1193 (GTVSLTMPPQESKQSPSADKSNTENGNHA) the composition is skewed to polar residues.

It belongs to the chloride channel (TC 2.A.49) family. In terms of tissue distribution, at embryonic stages 13-16, expressed in a subset of the midline cells of the midline primordium and in all of the midline glia. Expressed along the Z-line of the sarcomere in larval longitudinal muscles.

The protein resides in the membrane. Voltage-gated chloride channel. Chloride channels have several functions including the regulation of cell volume; membrane potential stabilization, signal transduction and transepithelial transport. This is Chloride channel protein 2 (ClC-a) from Drosophila melanogaster (Fruit fly).